The primary structure comprises 482 residues: FAD-dependent monooxygenase esdpE (482 aa).

The signal sequence occupies residues 1-21; sequence MGAERLKVIIVGGSIAGLTLA. Residues Glu-35 and Arg-108 each coordinate FAD. N-linked (GlcNAc...) asparagine glycosylation is present at Asn-243. Residues Asp-308 and Ala-321 each contribute to the FAD site. The chain crosses the membrane as a helical span at residues 440 to 460; the sequence is LFSGSLLLIMSVALLFGVICW.

Belongs to the paxM FAD-dependent monooxygenase family. The cofactor is FAD.

It localises to the membrane. It participates in secondary metabolite biosynthesis; terpenoid biosynthesis. Functionally, FAD-dependent monooxygenase; part of the cluster that mediates the biosynthesis of shearones, diterpenoid pyrones (DPs) which are structurally diverse meroterpenoids consisting of a diterpene linked by a pyrone, and which may exhibit a range of bioactivities. Within the pathway, esdpE takes part to the biosynthesis of the molecular scaffold by catalyzing the formation of an (S)-epoxide ring at the terminal olefin of the geranylgeranyl group. The molecular scaffold is commonly biosynthesized by a series of enzymes including the non-reducing polyketide synthase (NR-PKS) esdpA that generates an alpha-pyrone; the prenyltransferase esdpC that attaches a geranylgeranyl pyrophosphate (GGPP) produced by the GGPP synthase (GGPPS) esdpD onto the pyrone unit; the FAD-dependent monooxygenase esdpE that converts an olefin on the diterpene unit into an epoxide; and the terpene cyclase esdpB that catalyzes the cyclization reactions to give the molecular backbone shearone A. In the modification steps, esdpF oxidizes the hydroxy group to a ketone at C-3 and esdpG then attaches hydroxy groups at both C-11 and C-12. After that, esdpI hydroxylates at C-20 and esdpH hydroxylates at C-6'. The ether bridge is generated by nucleophilic attack of the hydroxy group at C-20 to the carbonyl carbon at C-3. EsdpH can also functions prior to esdpI. The different combinations of these modification enzymes lead to the production of diverse shearone derivatives, shearone I being the end product of the pathway. The alpha-ketoglutarate-dependent dioxygenase esdpJ seems not to be involved in this pathway. In Penicillium shearii (Eupenicillium shearii), this protein is FAD-dependent monooxygenase esdpE.